The chain runs to 99 residues: DNA-binding protein Fis (99 aa).

The segment at residues 75–94 (QTRAASIMGINRSTLRKKLK) is a DNA-binding region (H-T-H motif).

It belongs to the transcriptional regulatory Fis family. As to quaternary structure, homodimer.

In terms of biological role, activates ribosomal RNA transcription. Plays a direct role in upstream activation of rRNA promoters. The sequence is that of DNA-binding protein Fis from Buchnera aphidicola subsp. Schizaphis graminum (strain Sg).